Reading from the N-terminus, the 563-residue chain is Arginine--tRNA ligase (563 aa).

Residues 122-132 carry the 'HIGH' region motif; it reads PNIAKPISMGH.

Belongs to the class-I aminoacyl-tRNA synthetase family. Monomer.

The protein resides in the cytoplasm. The enzyme catalyses tRNA(Arg) + L-arginine + ATP = L-arginyl-tRNA(Arg) + AMP + diphosphate. The polypeptide is Arginine--tRNA ligase (Enterococcus faecalis (strain ATCC 700802 / V583)).